The sequence spans 594 residues: Actin-histidine N-methyltransferase (594 aa).

The tract at residues 1–22 is disordered; the sequence is MGKKSRVKTQKSGTGATATVSP. Over residues 10–20 the composition is skewed to polar residues; it reads QKSGTGATATV. S-adenosyl-L-methionine is bound by residues arginine 75, 104-106, arginine 254, 275-279, and 325-327; these read EGF, DMCNH, and SGF. The 221-residue stretch at 94 to 314 folds into the SET domain; that stretch reads EGFEMVNFKE…AGEQIYIFYG (221 aa). The residue at position 513 (serine 513) is a Phosphoserine. The segment at 549-594 is disordered; it reads ENGLVNGENSIPNGTRSENESLNQESKRAVEDAKGSSSDSTAGVKE. The span at 555-572 shows a compositional bias: polar residues; the sequence is GENSIPNGTRSENESLNQ. A compositionally biased stretch (basic and acidic residues) spans 573–582; that stretch reads ESKRAVEDAK. The segment covering 583–594 has biased composition (polar residues); the sequence is GSSSDSTAGVKE.

Belongs to the class V-like SAM-binding methyltransferase superfamily. SETD3 actin-histidine methyltransferase family. Interacts with MYOD1. Phosphorylated by GSK3B, which is required for recognition by the SCF(FBXW7) complex and subsequent degradation. In terms of processing, ubiquitinated by the SCF(FBXW7) complex following phosphorylation by GSK3B, leading to its degradation by the proteasome.

The protein localises to the cytoplasm. It localises to the nucleus. It catalyses the reaction L-histidyl-[protein] + S-adenosyl-L-methionine = N(tele)-methyl-L-histidyl-[protein] + S-adenosyl-L-homocysteine + H(+). In terms of biological role, protein-histidine N-methyltransferase that specifically mediates 3-methylhistidine (tele-methylhistidine) methylation of actin at 'His-73'. Histidine methylation of actin is required for smooth muscle contraction of the laboring uterus during delivery. Does not have protein-lysine N-methyltransferase activity and probably only catalyzes histidine methylation of actin. This chain is Actin-histidine N-methyltransferase, found in Homo sapiens (Human).